Reading from the N-terminus, the 274-residue chain is Bis(5'-nucleosyl)-tetraphosphatase, symmetrical (274 aa).

Belongs to the Ap4A hydrolase family.

The catalysed reaction is P(1),P(4)-bis(5'-adenosyl) tetraphosphate + H2O = 2 ADP + 2 H(+). Hydrolyzes diadenosine 5',5'''-P1,P4-tetraphosphate to yield ADP. The chain is Bis(5'-nucleosyl)-tetraphosphatase, symmetrical from Shewanella baltica (strain OS155 / ATCC BAA-1091).